Reading from the N-terminus, the 280-residue chain is Large ribosomal subunit protein uL2 (280 aa).

2 disordered regions span residues 1-25 (MGIRKYRPMTPGTRQRSGADFAEVT) and 230-280 (HPHG…SGRG). Basic residues predominate over residues 257-280 (KTRKRRKPSSKFIIRRRKTASGRG).

This sequence belongs to the universal ribosomal protein uL2 family. Part of the 50S ribosomal subunit. Forms a bridge to the 30S subunit in the 70S ribosome.

Its function is as follows. One of the primary rRNA binding proteins. Required for association of the 30S and 50S subunits to form the 70S ribosome, for tRNA binding and peptide bond formation. It has been suggested to have peptidyltransferase activity; this is somewhat controversial. Makes several contacts with the 16S rRNA in the 70S ribosome. The protein is Large ribosomal subunit protein uL2 of Gloeobacter violaceus (strain ATCC 29082 / PCC 7421).